The primary structure comprises 271 residues: Neurexophilin-1 (271 aa).

Positions 1–21 are cleaved as a signal peptide; the sequence is MQAACWYVLLLLQPTIYLVTC. Residues 22 to 97 are II; that stretch reads ANLTNGGKSE…WDWLRNSTDL (76 aa). N-linked (GlcNAc...) asparagine glycosylation is found at N23, N68, N93, N146, N156, and N162. Residues 98 to 176 form an III region; sequence QEPRPRAKRR…LVPPTKIVEF (79 aa). An IV (linker domain) region spans residues 177-185; the sequence is DLAQQTVID. The tract at residues 186-271 is v (Cys-rich); it reads AKDSKSFNCR…HSDTPYFPSG (86 aa).

The protein belongs to the neurexophilin family.

It localises to the secreted. Its function is as follows. May be signaling molecules that resemble neuropeptides and that act by binding to alpha-neurexins and possibly other receptors. The protein is Neurexophilin-1 (NXPH1) of Pongo abelii (Sumatran orangutan).